We begin with the raw amino-acid sequence, 102 residues long: Small ribosomal subunit protein bS6 (102 aa).

This sequence belongs to the bacterial ribosomal protein bS6 family.

Its function is as follows. Binds together with bS18 to 16S ribosomal RNA. The polypeptide is Small ribosomal subunit protein bS6 (Solidesulfovibrio magneticus (strain ATCC 700980 / DSM 13731 / RS-1) (Desulfovibrio magneticus)).